Here is a 191-residue protein sequence, read N- to C-terminus: Putative glutathione-dependent formaldehyde-activating enzyme (191 aa).

The region spanning Phe20–Asp166 is the CENP-V/GFA domain. Zn(2+) contacts are provided by Cys27, Cys29, Cys48, Cys50, Cys53, Cys95, and Cys98.

The protein belongs to the Gfa family. It depends on Zn(2+) as a cofactor.

It carries out the reaction S-(hydroxymethyl)glutathione = glutathione + formaldehyde. It participates in one-carbon metabolism; formaldehyde degradation; formate from formaldehyde (glutathione route): step 1/3. Catalyzes the condensation of formaldehyde and glutathione to S-hydroxymethylglutathione. This chain is Putative glutathione-dependent formaldehyde-activating enzyme, found in Colletotrichum graminicola (strain M1.001 / M2 / FGSC 10212) (Maize anthracnose fungus).